The chain runs to 232 residues: ATP synthase subunit a (232 aa).

The next 6 membrane-spanning stretches (helical) occupy residues 18–38 (LLFI…IAFI), 74–94 (WAGL…LGLF), 107–127 (TYSL…YLAF), 142–162 (ALIP…PIAL), 173–193 (GHLL…SLMV), and 195–215 (SIPI…VACI).

Belongs to the ATPase A chain family. F-type ATPases have 2 components, CF(1) - the catalytic core - and CF(0) - the membrane proton channel. CF(1) has five subunits: alpha(3), beta(3), gamma(1), delta(1), epsilon(1). CF(0) has three main subunits: a, b and c.

The protein localises to the mitochondrion inner membrane. In terms of biological role, mitochondrial membrane ATP synthase (F(1)F(0) ATP synthase or Complex V) produces ATP from ADP in the presence of a proton gradient across the membrane which is generated by electron transport complexes of the respiratory chain. F-type ATPases consist of two structural domains, F(1) - containing the extramembraneous catalytic core and F(0) - containing the membrane proton channel, linked together by a central stalk and a peripheral stalk. During catalysis, ATP synthesis in the catalytic domain of F(1) is coupled via a rotary mechanism of the central stalk subunits to proton translocation. Key component of the proton channel; it may play a direct role in the translocation of protons across the membrane. In Paracentrotus lividus (Common sea urchin), this protein is ATP synthase subunit a (ATP6).